The following is a 190-amino-acid chain: Elongation factor P (190 aa).

This sequence belongs to the elongation factor P family.

It localises to the cytoplasm. The protein operates within protein biosynthesis; polypeptide chain elongation. Its function is as follows. Involved in peptide bond synthesis. Stimulates efficient translation and peptide-bond synthesis on native or reconstituted 70S ribosomes in vitro. Probably functions indirectly by altering the affinity of the ribosome for aminoacyl-tRNA, thus increasing their reactivity as acceptors for peptidyl transferase. The sequence is that of Elongation factor P from Hyphomonas neptunium (strain ATCC 15444).